Reading from the N-terminus, the 910-residue chain is Protein kinase 3 (910 aa).

Over residues 119–129 (SPSGGGGGGSG) the composition is skewed to gly residues. Disordered stretches follow at residues 119 to 239 (SPSG…PNLI), 270 to 295 (FNNNNNNNNSNLTTTTTTTSTFKTPT), and 391 to 454 (NKDD…NDKK). Low complexity-rich tracts occupy residues 130–160 (VSSNGSNSTATSPNTSPIRLYVSDPSNQPTS), 169–196 (LSESVGVHRSSPMLSSSRMISQLSQSTS), 209–220 (GLSGSSTSSSSA), 227–239 (NNNANNSTPPNLI), 270–290 (FNNNNNNNNSNLTTTTTTTST), and 422–450 (INQPSSLPSNNNSNNNNITKSNSTTTSQT). Residues 498–763 (FELLKVLGVG…FEEISSHPFF (266 aa)) form the Protein kinase domain. Residues 504–512 (LGVGSFGRV) and K527 each bind ATP. The active-site Proton acceptor is the D621. Residue T664 is modified to Phosphothreonine; by autocatalysis. In terms of domain architecture, AGC-kinase C-terminal spans 764 to 854 (ELIPWRMLES…NKEEEDGIMG (91 aa)). Disordered regions lie at residues 786–812 (EISLPNSNSNSNNNSQQPTNNNLTLSC) and 859–910 (IGSI…KGSV). 2 stretches are compositionally biased toward low complexity: residues 788–809 (SLPNSNSNSNNNSQQPTNNNLT) and 859–886 (IGSISSNNSISSSPTSSSPINNNNSGGS).

It belongs to the protein kinase superfamily. AGC Ser/Thr protein kinase family.

The catalysed reaction is L-seryl-[protein] + ATP = O-phospho-L-seryl-[protein] + ADP + H(+). The enzyme catalyses L-threonyl-[protein] + ATP = O-phospho-L-threonyl-[protein] + ADP + H(+). The protein is Protein kinase 3 (pkgC) of Dictyostelium discoideum (Social amoeba).